The sequence spans 110 residues: Small ubiquitin-related modifier 3 (110 aa).

Residues Lys5 and Lys7 each participate in a glycyl lysine isopeptide (Lys-Gly) (interchain with G-Cter in SUMO2) cross-link. Lys11 is covalently cross-linked (Glycyl lysine isopeptide (Lys-Gly) (interchain with G-Cter in SUMO); alternate). Residue Lys11 forms a Glycyl lysine isopeptide (Lys-Gly) (interchain with G-Cter in SUMO2); alternate linkage. The Ubiquitin-like domain maps to 15-92 (DHINLKVAGQ…IDVFQQQTGG (78 aa)). Residues 89–101 (QTGGTASRASVPT) are compositionally biased toward polar residues. The tract at residues 89–110 (QTGGTASRASVPTPSHFPDICY) is disordered. Residue Gly92 forms a Glycyl lysine isopeptide (Gly-Lys) (interchain with K-? in acceptor proteins) linkage. The propeptide occupies 93–110 (TASRASVPTPSHFPDICY).

The protein belongs to the ubiquitin family. SUMO subfamily. In terms of assembly, interacts with SAE2 and UBE2I. Covalently attached to a number of proteins. Interacts with USP25 (via ts SIM domain); the interaction sumoylates USP25 and inhibits its ubiquitin hydrolyzing activity. Interacts with BMAL1. Post-translationally, polymeric chains can be formed through Lys-11 cross-linking. Cleavage of precursor form by SENP1, SENP2 or SENP5 is necessary for function.

The protein resides in the cytoplasm. It is found in the nucleus. Its subcellular location is the PML body. Its function is as follows. Ubiquitin-like protein which can be covalently attached to target lysines either as a monomer or as a lysine-linked polymer. Does not seem to be involved in protein degradation and may function as an antagonist of ubiquitin in the degradation process. Plays a role in a number of cellular processes such as nuclear transport, DNA replication and repair, mitosis and signal transduction. Covalent attachment to its substrates requires prior activation by the E1 complex SAE1-SAE2 and linkage to the E2 enzyme UBE2I, and can be promoted by an E3 ligase such as PIAS1-4, RANBP2 or CBX4. Plays a role in the regulation of sumoylation status of SETX. In Rattus norvegicus (Rat), this protein is Small ubiquitin-related modifier 3 (Sumo3).